The following is a 1345-amino-acid chain: Vascular endothelial growth factor receptor 2 (1345 aa).

Residues 1–19 form the signal peptide; it reads MESKALLAVALWFCVETRA. The Extracellular portion of the chain corresponds to 20–762; the sequence is ASVGLPGDFL…EGAQEKTNLE (743 aa). Residues Asn46, Asn98, Asn145, Asn160, and Asn247 are each glycosylated (N-linked (GlcNAc...) asparagine). 7 Ig-like C2-type domains span residues 46 to 111, 143 to 209, 226 to 325, 330 to 416, 423 to 542, 549 to 656, and 665 to 751; these read NTTL…RDVD, NKNK…INDE, YDVI…TFVR, PFIA…HMVS, PQIG…RVIS, PEIT…LVKQ, and PMIT…TLFI. Cys53 and Cys105 are joined by a disulfide. The cysteines at positions 152 and 202 are disulfide-linked. A disulfide bridge connects residues Cys248 and Cys309. Residues Asn320, Asn376, Asn397, Asn509, Asn521, Asn578, Asn611, Asn617, Asn629, Asn673, Asn702, and Asn719 are each glycosylated (N-linked (GlcNAc...) asparagine). 2 cysteine pairs are disulfide-bonded: Cys447–Cys528 and Cys569–Cys640. An intrachain disulfide couples Cys686 to Cys735. A helical transmembrane segment spans residues 763–783; it reads VIILVGTAVIAMFFWLLLVIV. The Cytoplasmic portion of the chain corresponds to 784-1345; it reads LRTVKRANEG…SGTTLRSPPV (562 aa). Phosphotyrosine is present on Tyr799. Residues 832 to 1160 form the Protein kinase domain; that stretch reads LKLGKPLGRG…FSELVEHLGN (329 aa). ATP contacts are provided by residues 838–846 and Lys866; that span reads LGRGAFGQV. Tyr949 carries the post-translational modification Phosphotyrosine; by autocatalysis. 2 positions are modified to phosphoserine: Ser980 and Ser982. A Phosphotyrosine; by autocatalysis modification is found at Tyr994. A disulfide bridge connects residues Cys1022 and Cys1043. Asp1026 (proton acceptor) is an active-site residue. Phosphotyrosine; by autocatalysis occurs at positions 1052, 1057, 1173, and 1212. Phosphoserine occurs at positions 1229 and 1233. Residue Thr1236 is modified to Phosphothreonine. Residues 1272 to 1316 are disordered; the sequence is DRNKLSPSFGGMMPSKSRESVASEGSNQTSGYQSGYHSDDTDTTV. The segment covering 1294–1307 has biased composition (polar residues); the sequence is SEGSNQTSGYQSGY. Phosphotyrosine; by autocatalysis occurs at positions 1303, 1307, and 1317.

It belongs to the protein kinase superfamily. Tyr protein kinase family. CSF-1/PDGF receptor subfamily. Homodimer in the presence of bound dimeric VEGFA, VEGFC or VEGFD ligands; monomeric in the absence of bound ligands. Can also form heterodimers with FLT1/VEGFR1 and KDR/VEGFR2. Interacts (tyrosine phosphorylated) with LFYN, NCK1, PLCG1. Interacts (tyrosine-phosphorylated active form preferentially) with DAB2IP (via C2 domain and active form preferentially); the interaction occurs at the late phase of VEGFA response and inhibits KDR/VEGFR2 activity. Interacts with SHBSH2D2A/TSAD, GRB2, MYOF, CBL and PDCD6. Interacts (via C-terminus domain) with ERN1 (via kinase domain); the interaction is facilitated in a XBP1 isoform 1- and vascular endothelial growth factor (VEGF)-dependent manner in endothelial cells. Interacts (via juxtamembrane region) with chaperone PDCL3 (via thioredoxin fold region); the interaction leads to increased KDR/VEGFR2 abundance through inhibition of its ubiquitination and degradation. Interacts (tyrosine phosphorylated) with CCDC88A/GIV (via SH2-like region); binding requires autophosphorylation of the KDR/VEGFR2 C-terminal region. Interacts with isoform 2 of BSG. Interacts with SLC31A1; this interaction is induced upon VEGFA stimulation leading to SLC31A1 and KDR subsequent co-internalization to early endosomes, thereby activating KDR downstream signaling in endothelial cells. Post-translationally, N-glycosylated. In terms of processing, ubiquitinated. Tyrosine phosphorylation of the receptor promotes its poly-ubiquitination, leading to its degradation via the proteasome or lysosomal proteases. Autophosphorylated on tyrosine residues upon ligand binding. Autophosphorylation occurs in trans, i.e. one subunit of the dimeric receptor phosphorylates tyrosine residues on the other subunit. Phosphorylation at Tyr-949 is important for interaction with SH2D2A/TSAD and VEGFA-mediated reorganization of the actin cytoskeleton. Phosphorylation at Tyr-1173 is important for interaction with PLCG1 and SHB. Phosphorylation at Tyr-1212 is important for interaction with NCK1 and FYN. Dephosphorylated by PTPRJ at Tyr-799, Tyr-949, Tyr-994, Tyr-1052, Tyr-1057, Tyr-1173 and Tyr-1212. Post-translationally, the inhibitory disulfide bond between Cys-1022 and Cys-1043 may serve as a specific molecular switch for H(2)S-induced modification that regulates KDR/VEGFR2 function. As to expression, expressed in endothelial cells (at protein level). Detected in embryonic endothelial cells, as well as hematopoietic stem and progenitor cells. Detected in vascular endothelium. Expressed at high levels in adult heart, lung, kidney, brain and skeletal muscle, but is also expressed at lower levels in most other adult tissues.

It is found in the cell junction. The protein localises to the endoplasmic reticulum. The protein resides in the cell membrane. It localises to the cytoplasm. Its subcellular location is the nucleus. It is found in the cytoplasmic vesicle. The protein localises to the early endosome. The protein resides in the secreted. The enzyme catalyses L-tyrosyl-[protein] + ATP = O-phospho-L-tyrosyl-[protein] + ADP + H(+). Present in an inactive conformation in the absence of bound ligand. Binding of VEGFA, VEGFC or VEGFD leads to dimerization and activation by autophosphorylation on tyrosine residues. May be regulated by hydrogen sulfide (H(2)S) levels via a sensitive intracellular disulfide bond. Functionally, tyrosine-protein kinase that acts as a cell-surface receptor for VEGFA, VEGFC and VEGFD. Plays an essential role in the regulation of angiogenesis, vascular development, vascular permeability, and embryonic hematopoiesis. Promotes proliferation, survival, migration and differentiation of endothelial cells. Promotes reorganization of the actin cytoskeleton. Isoforms lacking a transmembrane domain, such as isoform 2, may function as decoy receptors for VEGFA, VEGFC and/or VEGFD. Isoform 2 plays an important role as a negative regulator of VEGFA- and VEGFC-mediated lymphangiogenesis by limiting the amount of free VEGFA and/or VEGFC and by preventing their binding to FLT4. Modulates FLT1 and FLT4 signaling by forming heterodimers. Binding of vascular growth factors to isoform 1 leads to the activation of several signaling cascades. Activation of PLCG1 leads to the production of the cellular signaling molecules diacylglycerol and inositol 1,4,5-trisphosphate and the activation of protein kinase C. Mediates activation of MAPK1/ERK2, MAPK3/ERK1 and the MAP kinase signaling pathway, as well as of the AKT1 signaling pathway. Mediates phosphorylation of PIK3R1, the regulatory subunit of phosphatidylinositol 3-kinase, reorganization of the actin cytoskeleton and activation of PTK2/FAK1. Required for VEGFA-mediated induction of NOS2 and NOS3, leading to the production of the signaling molecule nitric oxide (NO) by endothelial cells. Phosphorylates PLCG1. Promotes phosphorylation of FYN, NCK1, NOS3, PIK3R1, PTK2/FAK1 and SRC. This chain is Vascular endothelial growth factor receptor 2, found in Mus musculus (Mouse).